We begin with the raw amino-acid sequence, 428 residues long: Elongation factor 1-alpha (428 aa).

In terms of domain architecture, tr-type G spans 5–225 (KPILNVAFIG…DAFQPPEKPT (221 aa)). The interval 14-21 (GHVDAGKS) is G1. 14 to 21 (GHVDAGKS) provides a ligand contact to GTP. Serine 21 contributes to the Mg(2+) binding site. The interval 70-74 (GVTID) is G2. A G3 region spans residues 91 to 94 (DCPG). Residues 91–95 (DCPGH) and 149–152 (NKMD) each bind GTP. The interval 149-152 (NKMD) is G4. Residues 189 to 191 (ASL) are G5.

This sequence belongs to the TRAFAC class translation factor GTPase superfamily. Classic translation factor GTPase family. EF-Tu/EF-1A subfamily.

It is found in the cytoplasm. It catalyses the reaction GTP + H2O = GDP + phosphate + H(+). Its function is as follows. GTP hydrolase that promotes the GTP-dependent binding of aminoacyl-tRNA to the A-site of ribosomes during protein biosynthesis. The chain is Elongation factor 1-alpha from Methanococcus maripaludis (strain C5 / ATCC BAA-1333).